The primary structure comprises 743 residues: MASEITNGKNGQNGKNGQKEESDSQIAPPIPYPKSVAFIISNEFCERFNYYGMRTILVLYLTNKLGYNEETATVLFHTFTMLVYIFPLIGALIADGWLGKYKTILYLSLVYSLGAMVVSFGAVPLSGMPTKAVTVVGLLLIAIGTGGIKPCVSAFGGDQFSLPAQSFQLAKFFSLFYFAINAGSLISTTFTPILRADVHCFGDQDCFSLAFGVPAILMIFSVIIFMAGKRLYRCQPPAGNMIFGVSRCIADAFKGWQKRRHSEPMESFLDYAKPTVGSRMVQETKCLGRILRLFLPFPVFWALFDQQGSRWTFQATRMDGNVLGFQIKPDQMQVVNPLLILGFLPLFDYIIYPALARCGIRRPLQKLTLGLLLAALGFFLSAGLEMKMEQAAYRATPIEPDMTHLRIYNGMPCRYEISSAVVQTPRVIEPLNVWEDLSLQMTESKEYTFNAQPVSGECPSIIDKLRLQPGKSVSYFLAQDKLVEFADGLQMAATDTGRTSVRALLNTPDGEGPVLLSTESATSQEPPLTLDKGNVPQLHRITPGFARVDINGKKVASFEAKEGRLYSILVTGSARDGYQHNVIEVVALSTVSILWQLPQIVVMTAAEVMFSVTGLEFSYSQSPPSMKSVLQACWLLSVAIGNMLVVVIAEFKFTSSQSGEFTLFASLMLVDMMIFLWLARSYQYKDQREDFEDDDDATIDSVMQSKPKATTVDTTARKTNGIEAEPGYGAYRNHAYDNDFSEA.

A disordered region spans residues 1 to 28 (MASEITNGKNGQNGKNGQKEESDSQIAP). Low complexity predominate over residues 7 to 16 (NGKNGQNGKN). Transmembrane regions (helical) follow at residues 74–94 (VLFHTFTMLVYIFPLIGALIA), 104–124 (ILYLSLVYSLGAMVVSFGAVP), 132–152 (AVTVVGLLLIAIGTGGIKPCV), 173–193 (FSLFYFAINAGSLISTTFTPI), 207–227 (FSLAFGVPAILMIFSVIIFMA), 334–354 (VVNPLLILGFLPLFDYIIYPA), 364–384 (LQKLTLGLLLAALGFFLSAGL), 597–619 (LPQIVVMTAAEVMFSVTGLEFSY), 629–649 (VLQACWLLSVAIGNMLVVVIA), and 659–679 (GEFTLFASLMLVDMMIFLWLA).

The protein belongs to the major facilitator superfamily. Proton-dependent oligopeptide transporter (POT/PTR) (TC 2.A.17) family. As to expression, expressed in thorax and abdomen of females: apical epithelial membranes of midgut, rectum, and reproductive tract. Also expressed in neuropil of the central nervous system, with elevated expression within the alpha- and beta-lobes of the mushroom bodies.

It is found in the membrane. Its function is as follows. Important role in absorption of dietary peptides. High-affinity transporter of alanylalanine. Dipeptide transport activity is proton dependent. The protein is Peptide transporter family 1 (yin) of Drosophila melanogaster (Fruit fly).